We begin with the raw amino-acid sequence, 1045 residues long: Elongation factor 3 (1045 aa).

Residues Ile-42, His-44, and Ser-83 each contribute to the ADP site. HEAT repeat units lie at residues 86-123 (PYVV…AVNP), 125-162 (AVKA…QAKS), 166-203 (LRMT…TVEN), 171-209 (LIPV…IERF), 205-241 (DIER…EVTP), 242-279 (ATLS…LVED), and 285-323 (PFLN…VGAV). Residues Thr-392 and His-396 each coordinate ADP. ABC transporter domains are found at residues 426 to 641 (EEGE…YYEL) and 667 to 993 (VKVS…KKED). The ADP site is built by Asn-703, Glu-922, Asn-925, and His-951. Positions 975–1045 (GHNWVSGQGS…AYVSDDDADF (71 aa)) are disordered. A compositionally biased stretch (basic residues) spans 1020-1031 (RKKKKERMKKKK).

It belongs to the ABC transporter superfamily. ABCF family. EF3 subfamily.

The protein resides in the cytoplasm. It localises to the cytosol. It carries out the reaction ATP + H2O = ADP + phosphate + H(+). The protein operates within protein biosynthesis; polypeptide chain elongation. In terms of biological role, ribosome-dependent ATPase that functions in cytoplasmic translation elongation. Required for the ATP-dependent release of deacylated tRNA from the ribosomal E-site during protein biosynthesis. Stimulates the eEF1A-dependent binding of aminoacyl-tRNA to the ribosomal A-site, which has reduced affinity for tRNA as long as the E-site is occupied. Assists translation termination by stimulating the release of nascent protein from the ribosome by release factors. The polypeptide is Elongation factor 3 (Zygosaccharomyces rouxii (strain ATCC 2623 / CBS 732 / NBRC 1130 / NCYC 568 / NRRL Y-229)).